Here is a 163-residue protein sequence, read N- to C-terminus: UPF0303 protein SAV_5210 (163 aa).

It belongs to the UPF0303 family.

In Streptomyces avermitilis (strain ATCC 31267 / DSM 46492 / JCM 5070 / NBRC 14893 / NCIMB 12804 / NRRL 8165 / MA-4680), this protein is UPF0303 protein SAV_5210.